Consider the following 237-residue polypeptide: Adenosine 5'-phosphosulfate reductase (237 aa).

Residues Cys-123, Cys-124, Cys-206, and Cys-209 each contribute to the [4Fe-4S] cluster site. Catalysis depends on Cys-232, which acts as the Nucleophile; cysteine thiosulfonate intermediate.

The protein belongs to the PAPS reductase family. CysH subfamily. The cofactor is [4Fe-4S] cluster.

Its subcellular location is the cytoplasm. The enzyme catalyses [thioredoxin]-disulfide + sulfite + AMP + 2 H(+) = adenosine 5'-phosphosulfate + [thioredoxin]-dithiol. It functions in the pathway sulfur metabolism; hydrogen sulfide biosynthesis; sulfite from sulfate. Functionally, catalyzes the formation of sulfite from adenosine 5'-phosphosulfate (APS) using thioredoxin as an electron donor. The chain is Adenosine 5'-phosphosulfate reductase from Mycobacteroides abscessus (strain ATCC 19977 / DSM 44196 / CCUG 20993 / CIP 104536 / JCM 13569 / NCTC 13031 / TMC 1543 / L948) (Mycobacterium abscessus).